Reading from the N-terminus, the 168-residue chain is NADH-quinone oxidoreductase subunit I (168 aa).

4Fe-4S ferredoxin-type domains are found at residues 58-88 (LRRYPNGEERCIACKLCEAVCPAQAITIEAG) and 99-128 (VRYDIDMVKCIYCGLCQEACPVDAIVEGPN). [4Fe-4S] cluster-binding residues include C68, C71, C74, C78, C108, C111, C114, and C118.

The protein belongs to the complex I 23 kDa subunit family. In terms of assembly, NDH-1 is composed of 14 different subunits. Subunits NuoA, H, J, K, L, M, N constitute the membrane sector of the complex. [4Fe-4S] cluster serves as cofactor.

It localises to the cell inner membrane. The enzyme catalyses a quinone + NADH + 5 H(+)(in) = a quinol + NAD(+) + 4 H(+)(out). Functionally, NDH-1 shuttles electrons from NADH, via FMN and iron-sulfur (Fe-S) centers, to quinones in the respiratory chain. The immediate electron acceptor for the enzyme in this species is believed to be ubiquinone. Couples the redox reaction to proton translocation (for every two electrons transferred, four hydrogen ions are translocated across the cytoplasmic membrane), and thus conserves the redox energy in a proton gradient. The sequence is that of NADH-quinone oxidoreductase subunit I from Bradyrhizobium diazoefficiens (strain JCM 10833 / BCRC 13528 / IAM 13628 / NBRC 14792 / USDA 110).